The sequence spans 141 residues: Large ribosomal subunit protein uL11 (141 aa).

The protein belongs to the universal ribosomal protein uL11 family. Part of the ribosomal stalk of the 50S ribosomal subunit. Interacts with L10 and the large rRNA to form the base of the stalk. L10 forms an elongated spine to which L12 dimers bind in a sequential fashion forming a multimeric L10(L12)X complex. Post-translationally, one or more lysine residues are methylated.

Its function is as follows. Forms part of the ribosomal stalk which helps the ribosome interact with GTP-bound translation factors. In Syntrophus aciditrophicus (strain SB), this protein is Large ribosomal subunit protein uL11.